The chain runs to 1351 residues: ABC transporter C family member 6 (1351 aa).

The ABC transmembrane type-1 1 domain occupies 112-397 (NKYALVSNLF…LPYDIFKAIG (286 aa)). A run of 3 helical transmembrane segments spans residues 120-140 (LFIIIFTFLSPICLKFLINYI), 149-169 (SILKGILLCCLLCLCVLGQSI), and 248-268 (LLCYVVGPSGLVGFGVMVIAL). An ABC transporter 1 domain is found at 474–700 (NQDESINKKE…GIDFKSILKT (227 aa)). 510–517 (GVVGSGKT) contacts ATP. Positions 701 to 734 (KEIKKNVENETDSEELIKNEIEIENEIIDVNNAI) form a coiled coil. 6 helical membrane-spanning segments follow: residues 771–791 (GSSGVTLFITISLFFVGQAIF), 815–835 (IGYYLLIFGTFVVILMIRILL), 904–924 (LISIVFIIPIMVIPLIILSIA), 977–999 (MFDNININLGCFFYSFAVHRWVS), 1002–1022 (LEVMGWIMVFFTSLIATLFIS), and 1025–1045 (GLAALSVTTALSLNGYLSWGI). The ABC transmembrane type-1 2 domain maps to 777-1060 (LFITISLFFV…LEVKMNSFQR (284 aa)). Residues 1101 to 1336 (IEFKNVEIKY…PNSKFNKLIK (236 aa)) form the ABC transporter 2 domain. ATP is bound at residue 1135 to 1142 (GRTGAGKT).

This sequence belongs to the ABC transporter superfamily. ABCC family. Conjugate transporter (TC 3.A.1.208) subfamily.

The protein localises to the membrane. The sequence is that of ABC transporter C family member 6 (abcC6) from Dictyostelium discoideum (Social amoeba).